A 119-amino-acid polypeptide reads, in one-letter code: UPF0102 protein HI_1656 (119 aa).

The protein belongs to the UPF0102 family.

The polypeptide is UPF0102 protein HI_1656 (Haemophilus influenzae (strain ATCC 51907 / DSM 11121 / KW20 / Rd)).